The following is a 2153-amino-acid chain: RNA-directed RNA polymerase L (2153 aa).

Mn(2+)-binding residues include H36, E54, D97, E110, and V111. The For endonuclease activity role is filled by K124. One can recognise a RdRp catalytic domain in the interval 957 to 1143 (TGNVIKFKRR…AVNQEMWKSM (187 aa)). D1100 lines the Mg(2+) pocket. Positions 1291 to 2153 (KQAFYSYKHT…FPHDPVSSFY (863 aa)) are interaction with the viral nucleoprotein.

The protein belongs to the Bunyavirales RNA polymerase family. In terms of assembly, interacts with the viral nucleoprotein; this interaction is required for RdRp function. The cofactor is Mn(2+). Requires Mg(2+) as cofactor.

The protein localises to the host cytoplasm. The protein resides in the host perinuclear region. It carries out the reaction RNA(n) + a ribonucleoside 5'-triphosphate = RNA(n+1) + diphosphate. In terms of biological role, RNA-dependent RNA polymerase, which is responsible for the replication and transcription of the viral RNA genome using antigenomic RNA as an intermediate. During transcription, synthesizes subgenomic RNAs and assures their capping by a cap-snatching mechanism, which involves the endonuclease activity cleaving the host capped pre-mRNAs. These short capped RNAs are then used as primers for viral transcription. Cleaves ssRNA substrates but not DNA. Seems to downregulate the expression of its own and heterologous mRNAs through its endonuclease activity. In Sin Nombre orthohantavirus (SNV), this protein is RNA-directed RNA polymerase L.